We begin with the raw amino-acid sequence, 470 residues long: mRNA export factor ICP27 homolog (470 aa).

Disordered stretches follow at residues 1 to 31 (MALSSVSSCEPMEDEMSIMGSDTEDNFTGGD) and 73 to 202 (FSAS…AGDR). Over residues 73–85 (FSASPQRAQPSNP) the composition is skewed to polar residues. Basic residues-rich tracts occupy residues 94–107 (HGRRNRRRPFRRNN) and 178–187 (RVHRNRRRGN). Residues C359, H437, C441, and C446 each coordinate Zn(2+). Residues 359 to 446 (CYLSSSGSPT…HKRRCKADTC (88 aa)) form a CHC2-type zinc finger.

It belongs to the HHV-1 ICP27 protein family. As to quaternary structure, homodimer. Homodimerization is required for transactivation. Associates in a complex with RNA, and host export factors NXF1/TAP and ALYREF; these interactions allow nuclear export of viral transcripts. Interacts with three host shuttling SR proteins SRSF1, SRSF3 and SRSF7. Interacts with host SRPK1. Interacts with IE62; this interaction enhances IE62 transactivation.

The protein resides in the host cytoplasm. Its subcellular location is the host nucleus. Multifunctional regulator of the expression of viral genes that mediates nuclear export of viral intronless mRNAs. This immediate early (EI) protein promotes the nuclear export of viral intronless mRNAs by interacting with mRNAs and host NXF1/TAP. The protein is mRNA export factor ICP27 homolog of Equine herpesvirus 1 (strain Kentucky A) (EHV-1).